The sequence spans 353 residues: UDP-xylose transporter 2 (353 aa).

Transmembrane regions (helical) follow at residues 7–27 (FQLG…SIVI), 31–51 (ALIS…HLLV), 75–95 (VLGF…SLGF), 100–120 (FYQM…TIFF), 132–152 (LVIL…LNML), 154–174 (SVLS…TNTI), 194–214 (AITL…QNVF), 224–244 (FFIV…FLVI), 250–270 (VTYQ…GYLL), and 280–300 (ILGI…CTLE). Positions 308-353 (TSTQLPQMDENEKDPLVSAENGSGLISDNGVQKQDPVWNSNKDFQA) are disordered. Residues 327–353 (ENGSGLISDNGVQKQDPVWNSNKDFQA) show a composition bias toward polar residues. At S334 the chain carries Phosphoserine.

This sequence belongs to the TPT transporter family. TPT (TC 2.A.7.9) subfamily. In terms of tissue distribution, ubiquitous.

It is found in the golgi apparatus membrane. In terms of biological role, nucleotide-sugar transporter that transports UDP-xylose and UMP in a strict counter-exchange mode. This chain is UDP-xylose transporter 2, found in Arabidopsis thaliana (Mouse-ear cress).